The following is a 668-amino-acid chain: MAEQDLFSLALERKHLYLKTHYNNINNLEGMNILQKSLLYRTYLPFYQIQKEQAQQLDQFQKEKQSVHNNNNNNNSNNNNNNNNNNNNNNNNNNNNNNNNNNNNNNNNNNYNNYNNNNNNNESVNNIIINSEPVYTNGGNEKEDEKEYANIHSDKIKIDYVDLIGKPYILDKDGFLPPPLSKQEITFWVSQKLTETDFSIIDYYFNDIRKSDYEKKKHIKKFERKQRQKEKEELKLKEKEELKLKEKEKRKKEREEREEREKQEKQEQEQQQQPPKKKLKETNKSLTLSTTINNKDNNHNGYYYYYDNDNDNYNDGDDEKEKEKEKEKEKEKENENENEDENDTSMVNSEEWTEEEVNKMNEIRGKLSTADYNYWDKVSAHVKSKTAEQCQRKYNSRFLTPLKPKSKLKSSSKPGIPTSPITMKTNPHTDKGKRKIRQITDETIMKQKHDLFNSFKTTKRVDYLEPLDEVVTTTNDVENLDFGEDLDKAFSAVNVNYTNTNNNNNNNNNNNNNNNNNNNNNNNNNNNNNNNNNNNNNNNNNNNKERKRIDREHWDSYIRNSMGRFSAKPPPIKTTTTTTTTTSDSTLASINNINNNNNNNNNDDILKKPFSIFDESSQKKSAEIISKISSQCEERKKKEDRDVDEDGEDDYYFGGDNSKNGDDDDEII.

Disordered regions lie at residues 57–124 (LDQF…NESV), 246–357 (EKEK…EEEV), 403–432 (KPKS…TDKG), 497–546 (YTNT…NKER), 561–583 (SMGR…TTTS), and 631–668 (QCEE…DEII). Residues 69–121 (NNNNNNNSNNNNNNNNNNNNNNNNNNNNNNNNNNNNNNNNNNYNNYNNNNNNN) are compositionally biased toward low complexity. Over residues 246-268 (EKEKRKKEREEREEREKQEKQEQ) the composition is skewed to basic and acidic residues. Over residues 293–307 (NNKDNNHNGYYYYYD) the composition is skewed to low complexity. Positions 308-318 (NDNDNYNDGDD) are enriched in acidic residues. Positions 319 to 335 (EKEKEKEKEKEKEKENE) are enriched in basic and acidic residues. Residues 344–398 (TSMVNSEEWTEEEVNKMNEIRGKLSTADYNYWDKVSAHVKSKTAEQCQRKYNSRF) form the Myb-like domain. Positions 501 to 542 (NNNNNNNNNNNNNNNNNNNNNNNNNNNNNNNNNNNNNNNNNN) are enriched in low complexity. Residues 632–641 (CEERKKKEDR) show a composition bias toward basic and acidic residues. A compositionally biased stretch (acidic residues) spans 642 to 651 (DVDEDGEDDY).

The polypeptide is Myb-like protein W (mybW) (Dictyostelium discoideum (Social amoeba)).